Reading from the N-terminus, the 689-residue chain is Glycine--tRNA ligase beta subunit (689 aa).

It belongs to the class-II aminoacyl-tRNA synthetase family. Tetramer of two alpha and two beta subunits.

The protein localises to the cytoplasm. The catalysed reaction is tRNA(Gly) + glycine + ATP = glycyl-tRNA(Gly) + AMP + diphosphate. The protein is Glycine--tRNA ligase beta subunit of Shewanella baltica (strain OS223).